Reading from the N-terminus, the 361-residue chain is Queuine tRNA-ribosyltransferase (361 aa).

The Proton acceptor role is filled by D92. Residues 92-96 (DSGGF), D146, Q189, and G216 contribute to the substrate site. The interval 247-253 (GVGKPAD) is RNA binding. D266 functions as the Nucleophile in the catalytic mechanism. An RNA binding; important for wobble base 34 recognition region spans residues 271–275 (TRSGR). Residues C304, C306, C309, and H335 each coordinate Zn(2+).

Belongs to the queuine tRNA-ribosyltransferase family. Homodimer. Within each dimer, one monomer is responsible for RNA recognition and catalysis, while the other monomer binds to the replacement base PreQ1. Zn(2+) serves as cofactor.

The catalysed reaction is 7-aminomethyl-7-carbaguanine + guanosine(34) in tRNA = 7-aminomethyl-7-carbaguanosine(34) in tRNA + guanine. It functions in the pathway tRNA modification; tRNA-queuosine biosynthesis. Its function is as follows. Catalyzes the base-exchange of a guanine (G) residue with the queuine precursor 7-aminomethyl-7-deazaguanine (PreQ1) at position 34 (anticodon wobble position) in tRNAs with GU(N) anticodons (tRNA-Asp, -Asn, -His and -Tyr). Catalysis occurs through a double-displacement mechanism. The nucleophile active site attacks the C1' of nucleotide 34 to detach the guanine base from the RNA, forming a covalent enzyme-RNA intermediate. The proton acceptor active site deprotonates the incoming PreQ1, allowing a nucleophilic attack on the C1' of the ribose to form the product. After dissociation, two additional enzymatic reactions on the tRNA convert PreQ1 to queuine (Q), resulting in the hypermodified nucleoside queuosine (7-(((4,5-cis-dihydroxy-2-cyclopenten-1-yl)amino)methyl)-7-deazaguanosine). The polypeptide is Queuine tRNA-ribosyltransferase (Rickettsia bellii (strain OSU 85-389)).